The following is a 161-amino-acid chain: SsrA-binding protein (161 aa).

Positions Asp138–Arg161 are disordered. Basic and acidic residues predominate over residues Lys139–Arg154.

The protein belongs to the SmpB family.

Its subcellular location is the cytoplasm. Functionally, required for rescue of stalled ribosomes mediated by trans-translation. Binds to transfer-messenger RNA (tmRNA), required for stable association of tmRNA with ribosomes. tmRNA and SmpB together mimic tRNA shape, replacing the anticodon stem-loop with SmpB. tmRNA is encoded by the ssrA gene; the 2 termini fold to resemble tRNA(Ala) and it encodes a 'tag peptide', a short internal open reading frame. During trans-translation Ala-aminoacylated tmRNA acts like a tRNA, entering the A-site of stalled ribosomes, displacing the stalled mRNA. The ribosome then switches to translate the ORF on the tmRNA; the nascent peptide is terminated with the 'tag peptide' encoded by the tmRNA and targeted for degradation. The ribosome is freed to recommence translation, which seems to be the essential function of trans-translation. In Aliivibrio fischeri (strain ATCC 700601 / ES114) (Vibrio fischeri), this protein is SsrA-binding protein.